A 179-amino-acid polypeptide reads, in one-letter code: MAAFAARYARAFADVVAEAHLPLEQVQQQLDDFMATWNGAADLREVFLDPSFPAEEKVAILDRMNQKLGLAPVVRNFLAVVLQHERMHAMEEILKEFREEMNRRLGITAVSITSARALNEAERKSLLEQVGTLAEGRVDASFHEDASLLGGVVVQIGSKVYDGSVRGRFARLEEQLAVR.

This sequence belongs to the ATPase delta chain family. In terms of assembly, F-type ATPases have 2 components, F(1) - the catalytic core - and F(0) - the membrane proton channel. F(1) has five subunits: alpha(3), beta(3), gamma(1), delta(1), epsilon(1). F(0) has three main subunits: a(1), b(2) and c(10-14). The alpha and beta chains form an alternating ring which encloses part of the gamma chain. F(1) is attached to F(0) by a central stalk formed by the gamma and epsilon chains, while a peripheral stalk is formed by the delta and b chains.

Its subcellular location is the cell inner membrane. Functionally, f(1)F(0) ATP synthase produces ATP from ADP in the presence of a proton or sodium gradient. F-type ATPases consist of two structural domains, F(1) containing the extramembraneous catalytic core and F(0) containing the membrane proton channel, linked together by a central stalk and a peripheral stalk. During catalysis, ATP synthesis in the catalytic domain of F(1) is coupled via a rotary mechanism of the central stalk subunits to proton translocation. Its function is as follows. This protein is part of the stalk that links CF(0) to CF(1). It either transmits conformational changes from CF(0) to CF(1) or is implicated in proton conduction. This Acidobacterium capsulatum (strain ATCC 51196 / DSM 11244 / BCRC 80197 / JCM 7670 / NBRC 15755 / NCIMB 13165 / 161) protein is ATP synthase subunit delta.